The following is a 368-amino-acid chain: Glutaminyl-peptide cyclotransferase (368 aa).

A signal peptide spans Met1 to Ala23. Residues Asn53 and Asn65 are each glycosylated (N-linked (GlcNAc...) asparagine). Cys143 and Cys169 are disulfide-bonded. Asp164 contacts Zn(2+). Glu207 acts as the Proton acceptor in catalysis. Zn(2+) is bound at residue Glu208. Asp254 (proton acceptor) is an active-site residue. Asn292 is a glycosylation site (N-linked (GlcNAc...) asparagine). His336 contributes to the Zn(2+) binding site. An N-linked (GlcNAc...) asparagine glycan is attached at Asn352.

Belongs to the glutaminyl-peptide cyclotransferase family. As to expression, expressed by the venom gland.

The protein localises to the secreted. It catalyses the reaction N-terminal L-glutaminyl-[peptide] = N-terminal 5-oxo-L-prolyl-[peptide] + NH4(+). In terms of biological role, responsible for the biosynthesis of pyroglutamyl peptides. Has a bias against acidic and tryptophan residues adjacent to the N-terminal glutaminyl residue and a lack of importance of chain length after the second residue. Also catalyzes N-terminal pyroglutamate formation. The polypeptide is Glutaminyl-peptide cyclotransferase (QPCT) (Bothrops jararaca (Jararaca)).